We begin with the raw amino-acid sequence, 332 residues long: Tyrosine--tRNA ligase (332 aa).

The L-tyrosine site is built by Tyr32, Tyr156, Gln160, Asp163, and Gln178. Positions 219–223 (KMSKS) match the 'KMSKS' region motif. Residue Lys222 participates in ATP binding.

Belongs to the class-I aminoacyl-tRNA synthetase family. TyrS type 4 subfamily. In terms of assembly, homodimer.

It is found in the cytoplasm. The enzyme catalyses tRNA(Tyr) + L-tyrosine + ATP = L-tyrosyl-tRNA(Tyr) + AMP + diphosphate + H(+). Catalyzes the attachment of tyrosine to tRNA(Tyr) in a two-step reaction: tyrosine is first activated by ATP to form Tyr-AMP and then transferred to the acceptor end of tRNA(Tyr). This is Tyrosine--tRNA ligase from Thermoplasma acidophilum (strain ATCC 25905 / DSM 1728 / JCM 9062 / NBRC 15155 / AMRC-C165).